We begin with the raw amino-acid sequence, 156 residues long: Protein US1 (156 aa).

2 disordered regions span residues 90 to 114 and 133 to 156; these read RSRSRTAESGRSSSSSSVSVLSDGD and ARRWTQRHDSEERASQQAKNDSTS. A compositionally biased stretch (low complexity) spans 96–111; that stretch reads AESGRSSSSSSVSVLS. Positions 147 to 156 are enriched in polar residues; it reads SQQAKNDSTS.

This chain is Protein US1 (US1), found in Homo sapiens (Human).